Here is a 356-residue protein sequence, read N- to C-terminus: MAALTSYEMAASILLCAEDSSSVLGFGGEEEEEEEDVVAGKRARCAGPPPPPCVDVAGVDFAVPSEECVARLVETEADHMPREDYAERLRAGGGDGDLDLRVRMDAIDWIWKVHSYYSFAPLTACLAVNYLDRFLSLYQLPDGKDWMTQLLAVACLSLAAKMEETDVPQSLDLQVGEERYVFEAKTIQRMELLVLSTLKWRMQAVTPFSYVDYFLRELNGGDPPSGRSALLSSELILCIARGTECLGFRPSEIAAAVAAAVVGEEHAAFSHVNKERMSHCQEVIQAMELIHPKPSSPSRVFVSSSIPRSPTGVLDAAGCLSYRSDDSAVASHYAASSWGYEHDSSPVSSKRRKISR.

It belongs to the cyclin family. Cyclin D subfamily.

The chain is Cyclin-D4-1 (CYCD4-1) from Oryza sativa subsp. japonica (Rice).